We begin with the raw amino-acid sequence, 870 residues long: Valine--tRNA ligase (870 aa).

The short motif at 42–52 is the 'HIGH' region element; it reads PNVTGVLHIGH. Positions 527–531 match the 'KMSKS' region motif; it reads KMSKS. Residue Lys-530 participates in ATP binding. Residues 800–870 adopt a coiled-coil conformation; that stretch reads LENVDLSGIL…ISVELQNLRG (71 aa).

The protein belongs to the class-I aminoacyl-tRNA synthetase family. ValS type 1 subfamily. Monomer.

It localises to the cytoplasm. The catalysed reaction is tRNA(Val) + L-valine + ATP = L-valyl-tRNA(Val) + AMP + diphosphate. Its function is as follows. Catalyzes the attachment of valine to tRNA(Val). As ValRS can inadvertently accommodate and process structurally similar amino acids such as threonine, to avoid such errors, it has a 'posttransfer' editing activity that hydrolyzes mischarged Thr-tRNA(Val) in a tRNA-dependent manner. The polypeptide is Valine--tRNA ligase (Campylobacter jejuni subsp. jejuni serotype O:2 (strain ATCC 700819 / NCTC 11168)).